The following is a 240-amino-acid chain: Putative S-adenosylmethionine-dependent methyltransferase RcsF (240 aa).

One can recognise a TsaA-like domain in the interval 5 to 142; it reads ISPIGHVRSC…YVPYADIVPD (138 aa). S-adenosyl-L-methionine is bound by residues 22 to 24, 63 to 64, arginine 91, and 122 to 125; these read PRQ, HQ, and LDGT.

It belongs to the tRNA methyltransferase O family.

This Pseudomonas aeruginosa protein is Putative S-adenosylmethionine-dependent methyltransferase RcsF (rcsF).